The primary structure comprises 138 residues: Protein NrdI (138 aa).

This sequence belongs to the NrdI family.

Functionally, probably involved in ribonucleotide reductase function. This is Protein NrdI from Paracoccus denitrificans (strain Pd 1222).